The sequence spans 73 residues: Translation initiation factor IF-1 2 (73 aa).

One can recognise an S1-like domain in the interval 1–72 (MAKEELVEFG…TKGRINYRHK (72 aa)).

It belongs to the IF-1 family. As to quaternary structure, component of the 30S ribosomal translation pre-initiation complex which assembles on the 30S ribosome in the order IF-2 and IF-3, IF-1 and N-formylmethionyl-tRNA(fMet); mRNA recruitment can occur at any time during PIC assembly.

Its subcellular location is the cytoplasm. In terms of biological role, one of the essential components for the initiation of protein synthesis. Stabilizes the binding of IF-2 and IF-3 on the 30S subunit to which N-formylmethionyl-tRNA(fMet) subsequently binds. Helps modulate mRNA selection, yielding the 30S pre-initiation complex (PIC). Upon addition of the 50S ribosomal subunit IF-1, IF-2 and IF-3 are released leaving the mature 70S translation initiation complex. This chain is Translation initiation factor IF-1 2, found in Cupriavidus pinatubonensis (strain JMP 134 / LMG 1197) (Cupriavidus necator (strain JMP 134)).